We begin with the raw amino-acid sequence, 441 residues long: Ribosomal protein uS12 methylthiotransferase RimO (441 aa).

The MTTase N-terminal domain occupies 8–118 (PKIGFVSLGC…VLEHVHHYVP (111 aa)). [4Fe-4S] cluster-binding residues include Cys17, Cys53, Cys82, Cys150, Cys154, and Cys157. The Radical SAM core domain occupies 136-373 (LTPRHYAYLK…MQLQQQISAE (238 aa)). In terms of domain architecture, TRAM spans 376 to 441 (QEKVGREILV…DEYDLWGSRV (66 aa)).

The protein belongs to the methylthiotransferase family. RimO subfamily. The cofactor is [4Fe-4S] cluster.

Its subcellular location is the cytoplasm. The enzyme catalyses L-aspartate(89)-[ribosomal protein uS12]-hydrogen + (sulfur carrier)-SH + AH2 + 2 S-adenosyl-L-methionine = 3-methylsulfanyl-L-aspartate(89)-[ribosomal protein uS12]-hydrogen + (sulfur carrier)-H + 5'-deoxyadenosine + L-methionine + A + S-adenosyl-L-homocysteine + 2 H(+). Its function is as follows. Catalyzes the methylthiolation of an aspartic acid residue of ribosomal protein uS12. The sequence is that of Ribosomal protein uS12 methylthiotransferase RimO from Shigella sonnei (strain Ss046).